The primary structure comprises 420 residues: Glucose-1-phosphate adenylyltransferase (420 aa).

Alpha-D-glucose 1-phosphate-binding positions include Tyr-107, Gly-172, 187–188, and Ser-205; that span reads EK.

This sequence belongs to the bacterial/plant glucose-1-phosphate adenylyltransferase family. Homotetramer.

It catalyses the reaction alpha-D-glucose 1-phosphate + ATP + H(+) = ADP-alpha-D-glucose + diphosphate. Its pathway is glycan biosynthesis; glycogen biosynthesis. In terms of biological role, involved in the biosynthesis of ADP-glucose, a building block required for the elongation reactions to produce glycogen. Catalyzes the reaction between ATP and alpha-D-glucose 1-phosphate (G1P) to produce pyrophosphate and ADP-Glc. The polypeptide is Glucose-1-phosphate adenylyltransferase (Rhizobium etli (strain CIAT 652)).